Reading from the N-terminus, the 316-residue chain is Cuticle collagen 7 (316 aa).

A signal peptide spans 1–34 (MSSATFLSVMAGLSGIVVFGALISVFHIYSDINS). Disordered regions lie at residues 78 to 269 (KQSQ…DAAY) and 281 to 316 (HRNV…HVQA). A compositionally biased stretch (polar residues) spans 79 to 90 (QSQCNCGQQASN). 3 triple-helical region regions span residues 94-126 (GPPG…AGPS), 139-198 (GLPG…PGKS), and 204-263 (GLPG…DGTP). Composition is skewed to low complexity over residues 110-125 (QPGQ…VAGP), 137-147 (PQGLPGPAGVP), and 177-198 (AGSA…PGKS). Over residues 209–221 (SGAPGPQGPPGAP) the composition is skewed to pro residues. The span at 241-260 (PNGQPGHPGQDGQPGAPGND) shows a compositional bias: low complexity.

Belongs to the cuticular collagen family. As to quaternary structure, collagen polypeptide chains are complexed within the cuticle by disulfide bonds and other types of covalent cross-links.

In terms of biological role, nematode cuticles are composed largely of collagen-like proteins. The cuticle functions both as an exoskeleton and as a barrier to protect the worm from its environment. The chain is Cuticle collagen 7 (col-7) from Caenorhabditis elegans.